Here is a 78-residue protein sequence, read N- to C-terminus: Exodeoxyribonuclease 7 small subunit (78 aa).

This sequence belongs to the XseB family. In terms of assembly, heterooligomer composed of large and small subunits.

The protein resides in the cytoplasm. The enzyme catalyses Exonucleolytic cleavage in either 5'- to 3'- or 3'- to 5'-direction to yield nucleoside 5'-phosphates.. Functionally, bidirectionally degrades single-stranded DNA into large acid-insoluble oligonucleotides, which are then degraded further into small acid-soluble oligonucleotides. The chain is Exodeoxyribonuclease 7 small subunit from Actinobacillus succinogenes (strain ATCC 55618 / DSM 22257 / CCUG 43843 / 130Z).